A 346-amino-acid chain; its full sequence is D-erythrose-4-phosphate dehydrogenase (346 aa).

11 to 12 (RI) lines the NAD(+) pocket. Substrate contacts are provided by residues 163 to 165 (SCT), Arg209, 222 to 223 (TK), and Arg245. The active-site Nucleophile is the Cys164. Asn327 contributes to the NAD(+) binding site.

This sequence belongs to the glyceraldehyde-3-phosphate dehydrogenase family. Epd subfamily. Homotetramer.

The protein localises to the cytoplasm. The enzyme catalyses D-erythrose 4-phosphate + NAD(+) + H2O = 4-phospho-D-erythronate + NADH + 2 H(+). It participates in cofactor biosynthesis; pyridoxine 5'-phosphate biosynthesis; pyridoxine 5'-phosphate from D-erythrose 4-phosphate: step 1/5. Its function is as follows. Catalyzes the NAD-dependent conversion of D-erythrose 4-phosphate to 4-phosphoerythronate. The chain is D-erythrose-4-phosphate dehydrogenase from Vibrio vulnificus (strain CMCP6).